Consider the following 158-residue polypeptide: Endoribonuclease YbeY (158 aa).

Zn(2+) contacts are provided by His120, His124, and His130.

This sequence belongs to the endoribonuclease YbeY family. Zn(2+) is required as a cofactor.

It is found in the cytoplasm. Its function is as follows. Single strand-specific metallo-endoribonuclease involved in late-stage 70S ribosome quality control and in maturation of the 3' terminus of the 16S rRNA. The sequence is that of Endoribonuclease YbeY from Spiroplasma citri.